The sequence spans 1057 residues: mRNA export factor elf1 (1057 aa).

2 ABC transporter domains span residues 440-659 (IEEE…VKPE) and 692-1019 (LKMT…KKKL). ATP contacts are provided by residues 477-484 (GHNGCGKS) and 726-733 (GPNGAGKS). At Ser733 the chain carries Phosphoserine. The Chromo domain occupies 820–869 (RRVEALIGRQKLKKSFQYEIKWFGKPHKYNTWVSREILLENGFQKFVQAF). Basic and acidic residues predominate over residues 1020-1036 (TRNEIKAKERRAREREL). A disordered region spans residues 1020–1057 (TRNEIKAKERRARERELAWLQSPKGTEKPKSFFSDDEE). Residues Ser1041 and Ser1053 each carry the phosphoserine modification.

It belongs to the ABC transporter superfamily. ABCF family. EF3 subfamily.

Its subcellular location is the cytoplasm. It localises to the nucleus. Has a direct role in the mRNA export process. Appears to act within the rae1 mediated mRNA export pathway. The sequence is that of mRNA export factor elf1 (elf1) from Schizosaccharomyces pombe (strain 972 / ATCC 24843) (Fission yeast).